Reading from the N-terminus, the 570-residue chain is Sulfite reductase [NADPH] hemoprotein beta-component (570 aa).

[4Fe-4S] cluster-binding residues include Cys434, Cys440, Cys479, and Cys483. A siroheme-binding site is contributed by Cys483.

Belongs to the nitrite and sulfite reductase 4Fe-4S domain family. Alpha(8)-beta(8). The alpha component is a flavoprotein, the beta component is a hemoprotein. Requires siroheme as cofactor. [4Fe-4S] cluster serves as cofactor.

It carries out the reaction hydrogen sulfide + 3 NADP(+) + 3 H2O = sulfite + 3 NADPH + 4 H(+). It functions in the pathway sulfur metabolism; hydrogen sulfide biosynthesis; hydrogen sulfide from sulfite (NADPH route): step 1/1. Its function is as follows. Component of the sulfite reductase complex that catalyzes the 6-electron reduction of sulfite to sulfide. This is one of several activities required for the biosynthesis of L-cysteine from sulfate. The sequence is that of Sulfite reductase [NADPH] hemoprotein beta-component from Escherichia coli (strain SMS-3-5 / SECEC).